A 122-amino-acid chain; its full sequence is Small ribosomal subunit protein uS13 (122 aa).

The disordered stretch occupies residues 97–122; sequence PVRGQRTHTNARTRKGPAKAIAGKKK.

Belongs to the universal ribosomal protein uS13 family. As to quaternary structure, part of the 30S ribosomal subunit. Forms a loose heterodimer with protein S19. Forms two bridges to the 50S subunit in the 70S ribosome.

Functionally, located at the top of the head of the 30S subunit, it contacts several helices of the 16S rRNA. In the 70S ribosome it contacts the 23S rRNA (bridge B1a) and protein L5 of the 50S subunit (bridge B1b), connecting the 2 subunits; these bridges are implicated in subunit movement. Contacts the tRNAs in the A and P-sites. This chain is Small ribosomal subunit protein uS13, found in Bartonella henselae (strain ATCC 49882 / DSM 28221 / CCUG 30454 / Houston 1) (Rochalimaea henselae).